A 163-amino-acid polypeptide reads, in one-letter code: Phosphopantetheine adenylyltransferase (163 aa).

Residue S9 coordinates substrate. ATP contacts are provided by residues 9–10 and H17; that span reads SF. Residues K41, I75, and R89 each coordinate substrate. ATP contacts are provided by residues 90–92, E100, and 125–131; these read GIR and HLYVRSD.

The protein belongs to the bacterial CoaD family. Homohexamer. Mg(2+) is required as a cofactor.

The protein localises to the cytoplasm. It catalyses the reaction (R)-4'-phosphopantetheine + ATP + H(+) = 3'-dephospho-CoA + diphosphate. It functions in the pathway cofactor biosynthesis; coenzyme A biosynthesis; CoA from (R)-pantothenate: step 4/5. In terms of biological role, reversibly transfers an adenylyl group from ATP to 4'-phosphopantetheine, yielding dephospho-CoA (dPCoA) and pyrophosphate. The sequence is that of Phosphopantetheine adenylyltransferase from Borrelia garinii subsp. bavariensis (strain ATCC BAA-2496 / DSM 23469 / PBi) (Borreliella bavariensis).